The primary structure comprises 143 residues: Large ribosomal subunit protein uL16c (143 aa).

It belongs to the universal ribosomal protein uL16 family. Part of the 50S ribosomal subunit.

The protein resides in the plastid. The protein localises to the chloroplast. In Cyanidioschyzon merolae (strain NIES-3377 / 10D) (Unicellular red alga), this protein is Large ribosomal subunit protein uL16c.